The chain runs to 279 residues: Tryptophan synthase alpha chain (279 aa).

Active-site proton acceptor residues include glutamate 50 and aspartate 61.

The protein belongs to the TrpA family. In terms of assembly, tetramer of two alpha and two beta chains.

It catalyses the reaction (1S,2R)-1-C-(indol-3-yl)glycerol 3-phosphate + L-serine = D-glyceraldehyde 3-phosphate + L-tryptophan + H2O. The protein operates within amino-acid biosynthesis; L-tryptophan biosynthesis; L-tryptophan from chorismate: step 5/5. Functionally, the alpha subunit is responsible for the aldol cleavage of indoleglycerol phosphate to indole and glyceraldehyde 3-phosphate. In Brucella suis biovar 1 (strain 1330), this protein is Tryptophan synthase alpha chain.